The chain runs to 296 residues: Nitrogenase iron protein (296 aa).

An ATP-binding site is contributed by 12–19; it reads GKGGIGKS. [4Fe-4S] cluster is bound at residue Cys-100. Arg-103 is subject to ADP-ribosylarginine; by dinitrogenase reductase ADP-ribosyltransferase. Cys-134 lines the [4Fe-4S] cluster pocket.

This sequence belongs to the NifH/BchL/ChlL family. Homodimer. [4Fe-4S] cluster is required as a cofactor. Post-translationally, the reversible ADP-ribosylation of Arg-103 inactivates the nitrogenase reductase and regulates nitrogenase activity.

It carries out the reaction N2 + 8 reduced [2Fe-2S]-[ferredoxin] + 16 ATP + 16 H2O = H2 + 8 oxidized [2Fe-2S]-[ferredoxin] + 2 NH4(+) + 16 ADP + 16 phosphate + 6 H(+). In terms of biological role, the key enzymatic reactions in nitrogen fixation are catalyzed by the nitrogenase complex, which has 2 components: the iron protein and the molybdenum-iron protein. The polypeptide is Nitrogenase iron protein (Acidithiobacillus ferrooxidans (strain ATCC 23270 / DSM 14882 / CIP 104768 / NCIMB 8455) (Ferrobacillus ferrooxidans (strain ATCC 23270))).